Consider the following 95-residue polypeptide: Putative regulatory protein STH1338 (95 aa).

This sequence belongs to the RemA family.

The polypeptide is Putative regulatory protein STH1338 (Symbiobacterium thermophilum (strain DSM 24528 / JCM 14929 / IAM 14863 / T)).